The primary structure comprises 205 residues: Ras-like protein 3 (205 aa).

Residue Gly16 to Ser23 coordinates GTP. The Effector region signature appears at Tyr38–Tyr46. GTP is bound by residues Asp63–Gln67 and Asn122–Asp125. Cys202 is modified (cysteine methyl ester). The S-farnesyl cysteine moiety is linked to residue Cys202. Positions Ile203–Met205 are cleaved as a propeptide — removed in mature form.

The protein belongs to the small GTPase superfamily. Ras family.

The protein localises to the cell membrane. The enzyme catalyses GTP + H2O = GDP + phosphate + H(+). Alternates between an inactive form bound to GDP and an active form bound to GTP. Activated by a guanine nucleotide-exchange factor (GEF) and inactivated by a GTPase-activating protein (GAP). The polypeptide is Ras-like protein 3 (RAS3) (Mucor circinelloides f. lusitanicus (Mucor racemosus var. lusitanicus)).